Here is a 573-residue protein sequence, read N- to C-terminus: AP-4 complex accessory subunit Tepsin (573 aa).

The ENTH domain maps to 8–141; the sequence is RDRLSFLHRL…FSDAVPQPPS (134 aa). 2 disordered regions span residues 136-155 and 194-311; these read VPQP…MGAQ and NAVR…NDCQ. Pro residues predominate over residues 137–150; sequence PQPPSQPPQIPPPA. A compositionally biased stretch (polar residues) spans 217 to 229; sequence PAVTPSASHTHPN. Low complexity predominate over residues 260–293; the sequence is SSPSSQNSSCTSNLSRASDSGSRSGSDSHSGTSR. The segment covering 294–303 has biased composition (basic and acidic residues); it reads EPGDLAERAE. Position 400 is a phosphoserine (S400). The tract at residues 497–526 is disordered; that stretch reads CSSEQGTESEQRLENTDTPEDSSSPLPWSP. The interaction with AP4B1 stretch occupies residues 526–536; sequence PNSLFAGMELV. The interval 563 to 573 is interaction with AP4E1; it reads SEPSAFAFLNM.

In terms of assembly, interacts with AP4B1 and AP4E1; the interaction is direct and mediates the association of TEPSIN with the adapter-like complex 4 (AP-4), a heterotetramer composed of AP4B1, AP4E1, AP4M1 and AP4S1.

The protein resides in the golgi apparatus. The protein localises to the trans-Golgi network membrane. It is found in the cytoplasmic vesicle. It localises to the cytoplasm. Its subcellular location is the cytosol. Its function is as follows. Associates with the adapter-like complex 4 (AP-4) and may therefore play a role in vesicular trafficking of proteins at the trans-Golgi network. This is AP-4 complex accessory subunit Tepsin from Mus musculus (Mouse).